Reading from the N-terminus, the 174-residue chain is Gamma-crystallin E (174 aa).

Beta/gamma crystallin 'Greek key' domains follow at residues 2–40 (GKIT…RVDS) and 41–83 (GCWM…RLIP). The connecting peptide stretch occupies residues 84-87 (HSSS). Beta/gamma crystallin 'Greek key' domains follow at residues 88–128 (HRIK…HVME) and 129–171 (GYWV…RRIM).

This sequence belongs to the beta/gamma-crystallin family. In terms of tissue distribution, detected in the superior olivary complex of the auditory hindbrain.

In terms of biological role, crystallins are the dominant structural components of the vertebrate eye lens. This Mus musculus (Mouse) protein is Gamma-crystallin E (Cryge).